The primary structure comprises 1357 residues: DNA-directed RNA polymerase subunit beta (1357 aa).

It belongs to the RNA polymerase beta chain family. The RNAP catalytic core consists of 2 alpha, 1 beta, 1 beta' and 1 omega subunit. When a sigma factor is associated with the core the holoenzyme is formed, which can initiate transcription.

It carries out the reaction RNA(n) + a ribonucleoside 5'-triphosphate = RNA(n+1) + diphosphate. Its function is as follows. DNA-dependent RNA polymerase catalyzes the transcription of DNA into RNA using the four ribonucleoside triphosphates as substrates. This Nitrosomonas europaea (strain ATCC 19718 / CIP 103999 / KCTC 2705 / NBRC 14298) protein is DNA-directed RNA polymerase subunit beta.